The chain runs to 1191 residues: Zinc finger protein ush (1191 aa).

Disordered stretches follow at residues methionine 1 to proline 153 and proline 169 to alanine 194. The span at valine 19–serine 28 shows a compositional bias: basic and acidic residues. Positions isoleucine 61–glutamate 73 are enriched in acidic residues. A phosphoserine mark is found at serine 116 and serine 118. Residues alanine 130 to lysine 151 show a composition bias toward pro residues. The CCHC FOG-type 1 zinc finger occupies leucine 202–isoleucine 235. Residues cysteine 210, cysteine 213, histidine 226, and cysteine 231 each contribute to the Zn(2+) site. The tract at residues aspartate 239–arginine 274 is disordered. The span at threonine 254–threonine 266 shows a compositional bias: low complexity. The segment at tyrosine 279 to histidine 301 adopts a C2H2-type 1 zinc-finger fold. The interval serine 304–glutamine 338 is disordered. The CCHC FOG-type 2 zinc finger occupies serine 335–arginine 368. Residues cysteine 343, cysteine 346, histidine 359, and cysteine 364 each coordinate Zn(2+). 3 disordered regions span residues glutamine 361 to lysine 413, glutamate 504 to proline 540, and alanine 601 to proline 635. Residues alanine 383–isoleucine 394 show a composition bias toward gly residues. 3 stretches are compositionally biased toward low complexity: residues serine 509–serine 523, proline 602–serine 613, and serine 620–proline 635. CCHC FOG-type zinc fingers lie at residues tyrosine 720–serine 753 and proline 791–glycine 824. Zn(2+) contacts are provided by cysteine 728, cysteine 731, histidine 744, cysteine 749, cysteine 799, cysteine 802, histidine 815, and cysteine 820. 3 consecutive C2H2-type zinc fingers follow at residues asparagine 882–valine 907, tyrosine 910–histidine 932, and phenylalanine 983–histidine 1006. Positions isoleucine 1011–threonine 1073 are disordered. A phosphoserine mark is found at serine 1013, serine 1015, and serine 1017. Polar residues predominate over residues valine 1025–serine 1040. A CCHC FOG-type 5 zinc finger spans residues alanine 1113–proline 1146. Positions 1121, 1124, 1137, and 1142 each coordinate Zn(2+). Position 1156 is a phosphoserine (serine 1156).

The protein belongs to the FOG (Friend of GATA) family. In terms of assembly, interacts with pnr, although weak this interaction is essential. Interacts with the isoform SrpNC of srp. Interacts with CtBP corepressor. First expressed in stage 5 at high levels in the primordium of the amnioserosa. Also expressed in germ band extending embryos in cells of the developing anterior and posterior midgut and in hemocyte precursors present in the cephalic mesoderm. In embryonic stage 8, it is expressed in blood cell precursors. By stage 10, it is expressed in hemocyte precursors that have spread throughout the lateral and ventral head mesoderm. By stage 11, it is expressed in the dorsal ectoderm and in precursor cells of the hemocytes and fat body. As embryogenesis proceeds, it is also expressed in stage 13 plasmatocytes migrating throughout the head mesoderm and down the ventral midline. By late embryogenesis, expression strongly decreases but remains in the dorsal ectoderm during dorsal closure, in cells within, or associated with, the central nervous system, and in plasmatocytes circulating throughout the embryonic hemolymph. During larval development, it is expressed in primary and secondary lobes of lymph glands. Expressed in the dorsal part of the thoracic imaginal disk.

Its subcellular location is the nucleus. Functionally, transcription regulator that modulates expression mediated by transcription factors of the GATA family such as pnr and srp. Represses transcription of proneural achaete-scute complex (AS-C), which is usually activated by pnr. Involved in cardiogenesis, blood, and eye development. During hematopoiesis, it is required to restrict the number of crystal cells, probably via its interaction with the isoform SrpNC of srp. Negatively regulates expression of sr. Probably acts by interacting with the GATA-type zinc finger of proteins such as pnr and srp, possibly antagonizing the interaction between the GATA-type zinc finger and some cofactor. The protein is Zinc finger protein ush (ush) of Drosophila melanogaster (Fruit fly).